A 420-amino-acid polypeptide reads, in one-letter code: Beta-arrestin-2 (420 aa).

Tyrosine 48 is modified (phosphotyrosine). Proline 176 and proline 181 each carry hydroxyproline; by PHD2. The segment at 240–409 is interaction with TRAF6; the sequence is ADICLFSTAQ…EDFARLRLKG (170 aa). Residue serine 360 is modified to Phosphoserine. The segment at 374 to 420 is interaction with AP2B1; sequence PETDAPVDTNLIEFETNYATDDDIVFEDFARLRLKGLKDEDYDDQFC. The residue at position 393 (threonine 393) is a Phosphothreonine. Residues 396–406 carry the [DE]-X(1,2)-F-X-X-[FL]-X-X-X-R motif motif; it reads DIVFEDFARLR.

Belongs to the arrestin family. Homooligomer; the self-association is mediated by InsP6-binding. Heterooligomer with ARRB1; the association is mediated by InsP6-binding. Interacts with ADRB2 and CHRM2. Interacts with PDE4A. Interacts with PDE4D. Interacts with MAPK10, MAPK1 and MAPK3. Interacts with DRD2. Interacts with FSHR. Interacts with CLTC. Interacts with HTR2C. Interacts with CRR5. Interacts with CXCR4. Interacts with SRC. Interacts with DUSP16; the interaction is interrupted by stimulation of AGTR1 and activation of MAPK10. Interacts with CHUK; the interaction is enhanced stimulation of ADRB2. Interacts with RELA. Interacts with MDM2; the interaction is enhanced by activation of GPCRs. Interacts with SLC9A5. Interacts with TRAF6. Interacts with IGF1R. Interacts with ENG. Interacts with KIR2DL1, KIR2DL3 and KIR2DL4. Interacts with LDLR. Interacts with AP2B1. Interacts with C5AR1. Interacts with RAF1. Interacts with MAP2K1. Interacts with MAPK1. Interacts with MAPK10; the interaction enhances MAPK10 activation by MAP3K5. Interacts with MAP2K4; the interaction is enhanced by presence of MAP3K5 and MAPK10. Interacts with MAP3K5. Interacts with AKT1. Interacts with IKBKB and MAP3K14. Interacts with SMO (activated). Interacts with GSK3A and GSK3B. Associates with protein phosphatase 2A (PP2A). Interacts with CXCR4; the interaction is dependent on C-terminal phosphorylation of CXCR4 and allows activation of MAPK1 and MAPK3. Interacts with GPR143. Interacts with HCK and CXCR1 (phosphorylated). Interacts with ACKR3 and ACKR4. Interacts with ARRDC1; the interaction is direct. Interacts with GPR61, GPR62 and GPR135. Interacts (via NACHT and LRR domains) with NLRP3; this interaction is direct and inducible by omega-3 polyunsaturated fatty acids (PUFAs). Interacts with FFAR4 (via C-terminus); this interaction is stimulated by long-chain fatty acids (LCFAs). Interacts with GPR35. Interacts with GPR84. Interacts with TIGIT; this interaction inhibits the NF-kappa-B pathway. Interacts with TGFBR3. Post-translationally, phosphorylated at Thr-382 in the cytoplasm; probably dephosphorylated at the plasma membrane. The phosphorylation does not regulate internalization and recycling of ADRB2, interaction with clathrin or AP2B1. In terms of processing, the ubiquitination status appears to regulate the formation and trafficking of beta-arrestin-GPCR complexes and signaling. Ubiquitination appears to occur GPCR-specific. Ubiquitinated by MDM2; the ubiquitination is required for rapid internalization of ADRB2. Deubiquitinated by USP33; the deubiquitination leads to a dissociation of the beta-arrestin-GPCR complex. Stimulation of a class A GPCR, such as ADRB2, induces transient ubiquitination and subsequently promotes association with USP33. Stimulation of a class B GPCR promotes a sustained ubiquitination. Deubiquitinated by USP20; allowing USP20 to deubiquitinate TRAF6 leading to inhibition of NF-kappa-B signaling. Hydroxylation by PHD2 modulates the rate of internalization by slowing down recruitment to the plasma membrane and inhibiting subsequent co-internalization with class A receptors. In terms of tissue distribution, found in a variety of tissues. The short isoform is the most abundant form in all tissues.

Its subcellular location is the cytoplasm. The protein resides in the nucleus. It is found in the cell membrane. The protein localises to the membrane. It localises to the clathrin-coated pit. Its subcellular location is the cytoplasmic vesicle. Its function is as follows. Functions in regulating agonist-mediated G-protein coupled receptor (GPCR) signaling by mediating both receptor desensitization and resensitization processes. During homologous desensitization, beta-arrestins bind to the GPRK-phosphorylated receptor and sterically preclude its coupling to the cognate G-protein; the binding appears to require additional receptor determinants exposed only in the active receptor conformation. The beta-arrestins target many receptors for internalization by acting as endocytic adapters (CLASPs, clathrin-associated sorting proteins) and recruiting the GPRCs to the adapter protein 2 complex 2 (AP-2) in clathrin-coated pits (CCPs). However, the extent of beta-arrestin involvement appears to vary significantly depending on the receptor, agonist and cell type. Internalized arrestin-receptor complexes traffic to intracellular endosomes, where they remain uncoupled from G-proteins. Two different modes of arrestin-mediated internalization occur. Class A receptors, like ADRB2, OPRM1, ENDRA, D1AR and ADRA1B dissociate from beta-arrestin at or near the plasma membrane and undergo rapid recycling. Class B receptors, like AVPR2, AGTR1, NTSR1, TRHR and TACR1 internalize as a complex with arrestin and traffic with it to endosomal vesicles, presumably as desensitized receptors, for extended periods of time. Receptor resensitization then requires that receptor-bound arrestin is removed so that the receptor can be dephosphorylated and returned to the plasma membrane. Mediates endocytosis of CCR7 following ligation of CCL19 but not CCL21. Involved in internalization of P2RY1, P2RY4, P2RY6 and P2RY11 and ATP-stimulated internalization of P2RY2. Involved in phosphorylation-dependent internalization of OPRD1 and subsequent recycling or degradation. Involved in ubiquitination of IGF1R. Beta-arrestins function as multivalent adapter proteins that can switch the GPCR from a G-protein signaling mode that transmits short-lived signals from the plasma membrane via small molecule second messengers and ion channels to a beta-arrestin signaling mode that transmits a distinct set of signals that are initiated as the receptor internalizes and transits the intracellular compartment. Acts as a signaling scaffold for MAPK pathways such as MAPK1/3 (ERK1/2) and MAPK10 (JNK3). ERK1/2 and JNK3 activated by the beta-arrestin scaffold are largely excluded from the nucleus and confined to cytoplasmic locations such as endocytic vesicles, also called beta-arrestin signalosomes. Acts as a signaling scaffold for the AKT1 pathway. GPCRs for which the beta-arrestin-mediated signaling relies on both ARRB1 and ARRB2 (codependent regulation) include ADRB2, F2RL1 and PTH1R. For some GPCRs the beta-arrestin-mediated signaling relies on either ARRB1 or ARRB2 and is inhibited by the other respective beta-arrestin form (reciprocal regulation). Increases ERK1/2 signaling in AGTR1- and AVPR2-mediated activation (reciprocal regulation). Involved in CCR7-mediated ERK1/2 signaling involving ligand CCL19. Is involved in type-1A angiotensin II receptor/AGTR1-mediated ERK activity. Is involved in type-1A angiotensin II receptor/AGTR1-mediated MAPK10 activity. Is involved in dopamine-stimulated AKT1 activity in the striatum by disrupting the association of AKT1 with its negative regulator PP2A. Involved in AGTR1-mediated chemotaxis. Appears to function as signaling scaffold involved in regulation of MIP-1-beta-stimulated CCR5-dependent chemotaxis. Involved in attenuation of NF-kappa-B-dependent transcription in response to GPCR or cytokine stimulation by interacting with and stabilizing CHUK. Suppresses UV-induced NF-kappa-B-dependent activation by interacting with CHUK. The function is promoted by stimulation of ADRB2 and dephosphorylation of ARRB2. Involved in p53/TP53-mediated apoptosis by regulating MDM2 and reducing the MDM2-mediated degradation of p53/TP53. May serve as nuclear messenger for GPCRs. Upon stimulation of OR1D2, may be involved in regulation of gene expression during the early processes of fertilization. Also involved in regulation of receptors other than GPCRs. Involved in endocytosis of TGFBR2 and TGFBR3 and down-regulates TGF-beta signaling such as NF-kappa-B activation. Involved in endocytosis of low-density lipoprotein receptor/LDLR. Involved in endocytosis of smoothened homolog/Smo, which also requires GRK2. Involved in endocytosis of SLC9A5. Involved in endocytosis of ENG and subsequent TGF-beta-mediated ERK activation and migration of epithelial cells. Involved in Toll-like receptor and IL-1 receptor signaling through the interaction with TRAF6 which prevents TRAF6 autoubiquitination and oligomerization required for activation of NF-kappa-B and JUN. Involved in insulin resistance by acting as insulin-induced signaling scaffold for SRC, AKT1 and INSR. Involved in regulation of inhibitory signaling of natural killer cells by recruiting PTPN6 and PTPN11 to KIR2DL1. Involved in IL8-mediated granule release in neutrophils. Involved in the internalization of the atypical chemokine receptor ACKR3. Acts as an adapter protein coupling FFAR4 receptor to specific downstream signaling pathways, as well as mediating receptor endocytosis. During the activation step of NLRP3 inflammasome, directly associates with NLRP3 leading to inhibition of pro-inflammatory cytokine release and inhibition of inflammation. The polypeptide is Beta-arrestin-2 (ARRB2) (Bos taurus (Bovine)).